The sequence spans 284 residues: Two-pore potassium channel 4 (284 aa).

The segment at 1 to 21 is disordered; sequence MEEENLLNENLLHPNESSPEE. Topologically, residues 1 to 31 are cytoplasmic; the sequence is MEEENLLNENLLHPNESSPEETQVTTVSKSK. Residues 32-52 traverse the membrane as a helical segment; the sequence is WTILVLAMILLLVYLTFGVCT. Residues 70 to 89 constitute an intramembrane region (pore-forming); it reads DAFYFSIVTFSTVGYGDIVP. A helical transmembrane segment spans residues 93-113; it reads TTKILTIVLVSTGVVFLDYLL. The Cytoplasmic segment spans residues 114–156; that stretch reads NRVVSHVLSLQENAILDRINKTRNRAIRDHIAEDGKIRLKWKL. A helical transmembrane segment spans residues 157–177; the sequence is CLAFCAVGLCVGSGALFLHVF. Residues 184 to 203 constitute an intramembrane region (pore-forming); sequence DSVYLSVISVTTVGYGDKTF. A helical transmembrane segment spans residues 211 to 231; the sequence is FAVFWLLLSTIAMATLFLYLA. Topologically, residues 232-284 are cytoplasmic; that stretch reads EMRIDRTTVMKLPPSESEFIVFKLRESGRISEDDIKQIVREFENLEEVPSSGS.

It belongs to the two pore domain potassium channel (TC 1.A.1.7) family. Homodimer. In terms of tissue distribution, predominantly expressed in pollen.

It is found in the cell membrane. Its function is as follows. Voltage-independent, instantaneously activating, potassium-selective plasma membrane ion channel. Open rectifier. Regulated by cytoplasmic pH and extra-cellular calcium. Has some permeability for Rb(+) and NH(4)(+), but none for Na(+) or Li(+). This chain is Two-pore potassium channel 4 (TPK4), found in Arabidopsis thaliana (Mouse-ear cress).